A 337-amino-acid chain; its full sequence is Probable RuBisCO transcriptional regulator (337 aa).

Residues 6-63 (FTLDQLRILKAIAVEGSFKRAADSLYVSQPAVSLQVQNLERQLDVPLFDRGGRRAQLT) enclose the HTH lysR-type domain. Residues 23 to 42 (FKRAADSLYVSQPAVSLQVQ) constitute a DNA-binding region (H-T-H motif).

This sequence belongs to the LysR transcriptional regulatory family.

Functionally, trans-acting transcriptional regulator of RuBisCO genes (rbcL and rbcS) expression. The polypeptide is Probable RuBisCO transcriptional regulator (rbcR) (Trichormus variabilis (strain ATCC 29413 / PCC 7937) (Anabaena variabilis)).